The primary structure comprises 354 residues: NADH-quinone oxidoreductase subunit H (354 aa).

8 helical membrane-spanning segments follow: residues 25–45, 91–111, 126–146, 170–190, 205–225, 253–273, 290–310, and 330–350; these read LVRI…LILW, WLYL…WAVI, LLYA…AGWA, MGFA…SEIV, FLSW…ISGI, MAFA…SALA, FIPG…VFIW, and VFLP…MSPL.

It belongs to the complex I subunit 1 family. NDH-1 is composed of 14 different subunits. Subunits NuoA, H, J, K, L, M, N constitute the membrane sector of the complex.

It localises to the cell inner membrane. It carries out the reaction a quinone + NADH + 5 H(+)(in) = a quinol + NAD(+) + 4 H(+)(out). In terms of biological role, NDH-1 shuttles electrons from NADH, via FMN and iron-sulfur (Fe-S) centers, to quinones in the respiratory chain. The immediate electron acceptor for the enzyme in this species is believed to be ubiquinone. Couples the redox reaction to proton translocation (for every two electrons transferred, four hydrogen ions are translocated across the cytoplasmic membrane), and thus conserves the redox energy in a proton gradient. This subunit may bind ubiquinone. This is NADH-quinone oxidoreductase subunit H from Burkholderia mallei (strain ATCC 23344).